Reading from the N-terminus, the 199-residue chain is Recombination protein RecR (199 aa).

Residues C57 to C72 form a C4-type zinc finger. Positions S80–A176 constitute a Toprim domain.

The protein belongs to the RecR family.

Its function is as follows. May play a role in DNA repair. It seems to be involved in an RecBC-independent recombinational process of DNA repair. It may act with RecF and RecO. This Streptococcus mutans serotype c (strain ATCC 700610 / UA159) protein is Recombination protein RecR.